Consider the following 343-residue polypeptide: Thymidine kinase (343 aa).

27–34 (GAYGIGKS) contacts ATP. The active-site Proton acceptor is glutamate 56. Substrate contacts are provided by tyrosine 74 and glutamine 98. Arginine 188 provides a ligand contact to ATP. A substrate-binding site is contributed by arginine 194.

The protein belongs to the herpesviridae thymidine kinase family. Homodimer.

It catalyses the reaction thymidine + ATP = dTMP + ADP + H(+). In terms of biological role, catalyzes the transfer of the gamma-phospho group of ATP to thymidine to generate dTMP in the salvage pathway of pyrimidine synthesis. The dTMP serves as a substrate for DNA polymerase during viral DNA replication. Allows the virus to be reactivated and to grow in non-proliferative cells lacking a high concentration of phosphorylated nucleic acid precursors. The polypeptide is Thymidine kinase (Felidae (cat family)).